The following is a 666-amino-acid chain: MKQYAIQPATLEFNAEGTPVSRDFDDVYFSNDNGLEETRYVFLGGNRLAERFPVHSHPLFIVAESGFGTGLNFLTLWQAFNNFRSEHPQATLQRLHFVSFEKFPLTRDDLALTHQHWPELAPWAEQLQAQWPLPLAGCHRLLLDQGRVTLDLWFGDINELTDQLDATLNQKVDAWFLDGFAPAKNPDMWTPNLFNTMARLARPGATLATFTSAGFVRRGLQEAGFTMQKRKGFGRKREMLCGVMERCLTPTISAPWFYRSGSEKRETAIIGGGIASALLSLALLRRGWQVTLYCADDKPARGASGNQQGALYPLLSKHDAAINRFFPTAFTFARRLYDALPVSFDHDWCGVTQLGWDEKSQQKIARMLSLALPAGLASALNAEETTQAVGVTTRCGGITYPAGGWLCPEQLTRAVIALATEQGLQTRFRHTLTSLAAQKSQWQLRFASGEAASHDTVVLANGHQINRFDQTQPLPVYAVGGQVSHIPTTPALSALRQVLCYDGYLTPQNPNNRQHCIGASYHRGNESTVWREEDQRQNRQRLLDCFPDADWAKEVDVSDNSARCGVRCATRDHLPMVGNVPDYHATLTHYADLADNKASAVPAPVYPGLFMLGALGSRGLCSAPLCAEILAAQMSNEPIPLDASTLAALNPNRLWVRKLLKGKAVK.

Residues 1–245 form a tRNA (mnm(5)s(2)U34)-methyltransferase region; that stretch reads MKQYAIQPAT…KREMLCGVME (245 aa). Residues 270–666 form an FAD-dependent cmnm(5)s(2)U34 oxidoreductase region; it reads IGGGIASALL…RKLLKGKAVK (397 aa).

The protein in the N-terminal section; belongs to the methyltransferase superfamily. tRNA (mnm(5)s(2)U34)-methyltransferase family. In the C-terminal section; belongs to the DAO family. The cofactor is FAD.

It localises to the cytoplasm. It carries out the reaction 5-aminomethyl-2-thiouridine(34) in tRNA + S-adenosyl-L-methionine = 5-methylaminomethyl-2-thiouridine(34) in tRNA + S-adenosyl-L-homocysteine + H(+). Its function is as follows. Catalyzes the last two steps in the biosynthesis of 5-methylaminomethyl-2-thiouridine (mnm(5)s(2)U) at the wobble position (U34) in tRNA. Catalyzes the FAD-dependent demodification of cmnm(5)s(2)U34 to nm(5)s(2)U34, followed by the transfer of a methyl group from S-adenosyl-L-methionine to nm(5)s(2)U34, to form mnm(5)s(2)U34. The sequence is that of tRNA 5-methylaminomethyl-2-thiouridine biosynthesis bifunctional protein MnmC from Salmonella arizonae (strain ATCC BAA-731 / CDC346-86 / RSK2980).